The chain runs to 439 residues: Cytochrome b-c1 complex reductase subunit, mitochondrial (439 aa).

Residues 1-17 (MIRGSSALKSLTSRRLY) constitute a mitochondrion transit peptide.

The protein belongs to the peptidase M16 family. UQCRC1/QCR1 subfamily. In terms of assembly, component of the ubiquinol-cytochrome c oxidoreductase (cytochrome b-c1 complex, complex III, CIII), a multisubunit enzyme composed of 10 subunits. The complex is composed of 3 respiratory subunits cytochrome b (COB), cytochrome c1 (CYT1) and Rieske protein (RIP1), 2 core protein subunits COR1 and QCR2, and 5 low-molecular weight protein subunits QCR6, QCR7, QCR8, QCR9 and QCR10. The complex exists as an obligatory dimer and forms supercomplexes (SCs) in the inner mitochondrial membrane with a monomer or a dimer of cytochrome c oxidase (complex IV, CIV), resulting in 2 different assemblies (supercomplexes III(2)IV and III(2)IV(2)).

The protein resides in the mitochondrion inner membrane. Component of the ubiquinol-cytochrome c oxidoreductase, a multisubunit transmembrane complex that is part of the mitochondrial electron transport chain which drives oxidative phosphorylation. The complex plays an important role in the uptake of multiple carbon sources present in different host niches. This is Cytochrome b-c1 complex reductase subunit, mitochondrial from Candida albicans (strain SC5314 / ATCC MYA-2876) (Yeast).